Consider the following 60-residue polypeptide: Large ribosomal subunit protein uL30 (60 aa).

Belongs to the universal ribosomal protein uL30 family. In terms of assembly, part of the 50S ribosomal subunit.

This chain is Large ribosomal subunit protein uL30, found in Limosilactobacillus reuteri (strain DSM 20016) (Lactobacillus reuteri).